We begin with the raw amino-acid sequence, 740 residues long: Gramillins biosynthetic cluster protein FGSG_11657 (740 aa).

4 disordered regions span residues 353–391 (QADS…SSIP), 414–434 (SKLS…DAAS), 514–535 (PKEQ…GSSD), and 656–686 (EHEG…PQGD). Residues 656–667 (EHEGEGRADTNR) show a composition bias toward basic and acidic residues. Residues 668–682 (HVSTQSNMPTEQSLL) show a composition bias toward polar residues.

Its pathway is mycotoxin biosynthesis. Functionally, part of the gene cluster that mediates the biosynthesis of gramillins A and B, bicyclic lipopeptides that induce cell death in maize leaves but not in wheat leaves. The nonribosomal peptide synthetase GRA1 incorporates respectively a glutamic adic (Glu), a leucine (Leu), a serine (Ser), a hydroxyglutamine (HOGln), a 2-amino decanoic acid, and 2 cysteins (CysB and CysA). The biosynthesis of 2-amino decanoic acid incorporated in gramillins could be initiated by a fatty acid synthase composed of the alpha and beta subunits FGSG_00036 and FGSG_11656. The cytochrome P450 monooxygenase FGSG_15680 could hydroxylate the fatty acid chain. Subsequent oxidation to the ketone by the oxidoreductase FGSG_00048 and transamination by aminotransferase FGSG_00049 could form 2-amino-decanoic acid. On the other hand, FGSG_15680 could also be responsible for the HO-modified glutamine at the gamma-position. Whether hydroxylation occurs on the fully assembled product or on the Gln residue prior to assembly into the gramillins requires further proof. The thioredoxin FGSG_00043 could also be required for the disulfide-bond formation between CysA and CysB. The specific involvement of the remaining proteins from the cluster is more difficult to discern, but could have broader regulatory (FGSG_00040 and FGSG_11657) or enzymatic functions (FGSG_00044 and FGSG_00045). The final C-domain of GRA1 does not possess the expected sequence of a termination CT domain, often implicated in macrocyclization and release of a cyclopeptidein fungal NRPs; and the thioesterase FGSG_00047 may act in concert with the terminal C-domain of GRA1 to catalyze the formation of the macrocyclic anhydride and release of the products. This Gibberella zeae (strain ATCC MYA-4620 / CBS 123657 / FGSC 9075 / NRRL 31084 / PH-1) (Wheat head blight fungus) protein is Gramillins biosynthetic cluster protein FGSG_11657.